Consider the following 518-residue polypeptide: 2-isopropylmalate synthase (518 aa).

Residues Val-5–Tyr-267 form the Pyruvate carboxyltransferase domain. 4 residues coordinate Mn(2+): Asp-14, His-202, His-204, and Asn-238. The segment at Ser-392–Asn-518 is regulatory domain.

This sequence belongs to the alpha-IPM synthase/homocitrate synthase family. LeuA type 1 subfamily. Homodimer. It depends on Mn(2+) as a cofactor.

Its subcellular location is the cytoplasm. It catalyses the reaction 3-methyl-2-oxobutanoate + acetyl-CoA + H2O = (2S)-2-isopropylmalate + CoA + H(+). Its pathway is amino-acid biosynthesis; L-leucine biosynthesis; L-leucine from 3-methyl-2-oxobutanoate: step 1/4. Catalyzes the condensation of the acetyl group of acetyl-CoA with 3-methyl-2-oxobutanoate (2-ketoisovalerate) to form 3-carboxy-3-hydroxy-4-methylpentanoate (2-isopropylmalate). The chain is 2-isopropylmalate synthase from Buchnera aphidicola subsp. Rhopalosiphum padi.